A 1368-amino-acid chain; its full sequence is MQYSFTEKKRIRKSFAKRPIVHQVPFLLATQLESFSTFLQADTSSTQRKPEGLQAAFTSVFPIVSHNGFARLEFVSYMLSPPAFNIKECQQRGLTYCSALRAKVRLVLLDKESPSKPVVKEVKEQEVYMGEIPLMTPTGSFVINGTERVIVSQLHRSPGVFFEHDKGKTHSSGKLLFSARIIPYRGSWLDFEFDPKDVLYFRVDRRRKMPVTILLKAIGLTPEQILANFFVFDNFTLMPEGAQMEFVPERLRGEVARFDITDRDGNVIVQKDKRINAKHIRDLDNAKTKFISVPEDYLLGRVLAKNVVDGDTGEVIANANDEITETVLEKLRESKIKDIQTLYTNDLDQGPYISSTLRIDETADKMAARIAIYRMMRPGEPPTEEAVEALFNRLFYSEDAYDLSKVGRMKFNRRVGRDEIVGPMTLQDDDILATIKILVELRNGKGEVDDIDHLGNRRVRCVGELAENQFRAGLVRVERAVKERLGQAESENLMPHDLINSKPISSAIREFFGSSQLSQFMDQTNPLSEITHKRRVSALGPGGLTRERAGFEVRDVHPTHYGRVCPIETPEGPNIGLINSLALYAHLNEYGFLETPYRKVVDSKVTDQIDYLSAIEEGRYVIAQANAAVAEDGSLTDELVSSREAGETLMVTPDRIQYMDVAPSQIVSVAASLIPFLEHDDANRALMGSNMQRQAVPCLRPEKAVVGTGIERTVAVDSGTTVQAFRGGVVDYVDAGRMVIRVNDDEAAAGETGVDIYNLIKYTRSNQNTNINQRPIVKVGDIVSRGDVLADGASTDLGELALGQNMLVAFMPWNGYNFEDSILISEKVVADDRYTSIHIEELNVVARDTKLGPEEITRDISNLAEVQLGRLDESGIVYIGAEVEAGDVLVGKVTPKGETQLTPEEKLLRAIFGEKASDVKDTSLRVPSGMSGTVIDVQVFTREGIQRDKRAQQIIDDELKRYRLDLNDQLRIVEGDAFQRLARMLDGKVANGGPKKLAKGTKIEQAYLQDLDHYHWFDIRLADEEAAAQLEAIKDSIEQKRHQFDLAFEEKRKKLTQGDELPPGVLKMVKVYLAVKRRLQPGDKMAGRHGNKGVVSKIVPIEDMPYMADGRPADVVLNPLGVPSRMNVGQVLEVHLGWAAKGLGWRIGEMLQRQAKIAELREFLTKIYNESGRAEELDSFTDDEIVELAKNLREGVPFATPVFDGATEEEMSRALDLAFPDDIAKNLGMTPSKNQVRLYDGRTGEMFERTVTVGYMHYLKLHHLVDDKMHARSTGPYSLVTQQPLGGKAQFGGQRFGEMEVWALEAYGASYVLQEMLTVKSDDVTGRTKVYENLVKGDHVIDAGMPESFNVLVKEIRSLGIDIDLDRN.

Belongs to the RNA polymerase beta chain family. The RNAP catalytic core consists of 2 alpha, 1 beta, 1 beta' and 1 omega subunit. When a sigma factor is associated with the core the holoenzyme is formed, which can initiate transcription.

The catalysed reaction is RNA(n) + a ribonucleoside 5'-triphosphate = RNA(n+1) + diphosphate. Its function is as follows. DNA-dependent RNA polymerase catalyzes the transcription of DNA into RNA using the four ribonucleoside triphosphates as substrates. In Paraburkholderia phytofirmans (strain DSM 17436 / LMG 22146 / PsJN) (Burkholderia phytofirmans), this protein is DNA-directed RNA polymerase subunit beta.